The chain runs to 368 residues: UDP-N-acetylglucosamine--N-acetylmuramyl-(pentapeptide) pyrophosphoryl-undecaprenol N-acetylglucosamine transferase (368 aa).

Residues 10–12, asparagine 124, serine 196, isoleucine 251, and glutamine 296 each bind UDP-N-acetyl-alpha-D-glucosamine; that span reads TGG.

It belongs to the glycosyltransferase 28 family. MurG subfamily.

It localises to the cell membrane. It carries out the reaction Mur2Ac(oyl-L-Ala-gamma-D-Glu-L-Lys-D-Ala-D-Ala)-di-trans,octa-cis-undecaprenyl diphosphate + UDP-N-acetyl-alpha-D-glucosamine = beta-D-GlcNAc-(1-&gt;4)-Mur2Ac(oyl-L-Ala-gamma-D-Glu-L-Lys-D-Ala-D-Ala)-di-trans,octa-cis-undecaprenyl diphosphate + UDP + H(+). It functions in the pathway cell wall biogenesis; peptidoglycan biosynthesis. Its function is as follows. Cell wall formation. Catalyzes the transfer of a GlcNAc subunit on undecaprenyl-pyrophosphoryl-MurNAc-pentapeptide (lipid intermediate I) to form undecaprenyl-pyrophosphoryl-MurNAc-(pentapeptide)GlcNAc (lipid intermediate II). The protein is UDP-N-acetylglucosamine--N-acetylmuramyl-(pentapeptide) pyrophosphoryl-undecaprenol N-acetylglucosamine transferase of Limosilactobacillus fermentum (strain NBRC 3956 / LMG 18251) (Lactobacillus fermentum).